We begin with the raw amino-acid sequence, 262 residues long: Acyl-[acyl-carrier-protein]--UDP-N-acetylglucosamine O-acyltransferase (262 aa).

The protein belongs to the transferase hexapeptide repeat family. LpxA subfamily. As to quaternary structure, homotrimer.

The protein localises to the cytoplasm. The enzyme catalyses a (3R)-hydroxyacyl-[ACP] + UDP-N-acetyl-alpha-D-glucosamine = a UDP-3-O-[(3R)-3-hydroxyacyl]-N-acetyl-alpha-D-glucosamine + holo-[ACP]. Its pathway is glycolipid biosynthesis; lipid IV(A) biosynthesis; lipid IV(A) from (3R)-3-hydroxytetradecanoyl-[acyl-carrier-protein] and UDP-N-acetyl-alpha-D-glucosamine: step 1/6. Its function is as follows. Involved in the biosynthesis of lipid A, a phosphorylated glycolipid that anchors the lipopolysaccharide to the outer membrane of the cell. This is Acyl-[acyl-carrier-protein]--UDP-N-acetylglucosamine O-acyltransferase from Paraburkholderia xenovorans (strain LB400).